We begin with the raw amino-acid sequence, 94 residues long: UPF0235 protein Dred_0717 (94 aa).

It belongs to the UPF0235 family.

The chain is UPF0235 protein Dred_0717 from Desulforamulus reducens (strain ATCC BAA-1160 / DSM 100696 / MI-1) (Desulfotomaculum reducens).